Here is a 206-residue protein sequence, read N- to C-terminus: Thymidylate kinase (206 aa).

Residue 11–18 participates in ATP binding; it reads GIDGAGKT.

Belongs to the thymidylate kinase family.

It catalyses the reaction dTMP + ATP = dTDP + ADP. In terms of biological role, phosphorylation of dTMP to form dTDP in both de novo and salvage pathways of dTTP synthesis. The sequence is that of Thymidylate kinase from Paraburkholderia xenovorans (strain LB400).